Consider the following 374-residue polypeptide: Peptide chain release factor 2 (374 aa).

At glutamine 252 the chain carries N5-methylglutamine.

Belongs to the prokaryotic/mitochondrial release factor family. Post-translationally, methylated by PrmC. Methylation increases the termination efficiency of RF2.

The protein localises to the cytoplasm. Functionally, peptide chain release factor 2 directs the termination of translation in response to the peptide chain termination codons UGA and UAA. This chain is Peptide chain release factor 2, found in Xanthomonas euvesicatoria pv. vesicatoria (strain 85-10) (Xanthomonas campestris pv. vesicatoria).